Reading from the N-terminus, the 439-residue chain is MESWSRCLERLETEFPPEDVHTWLRPLQADQRGDSVILYAPNTFIIELVEERYLGRLRELLSYFSGIREVVLAIGSRPKTTELTVPVDTTGRLSQTVPFNGNLDTHYNFDNFVEGRSNQLARAAAWQAAQKPGDRTHNPLLLYGGTGLGKTHLMFAAGNVMRQVNPTYKVMYLRSEQFFSAMIRALQDKSMDQFKRQFHQIDALLIDDIQFFAGKDRTQEEFFHTFNALFDGKQQIILTCDRYPREVNGLEPRLKSRLAWGLSVAIDPPDFETRAAIVLAKARERGATIPDEVAFLIAKKMHSNVRDLEGALNTLVARANFTGRAVTIEFSQETLRDLLRAQQQTIGIPNIQKIVADYYGLQIKDLLSKRRTRSLARPRQLAMALAKELTEHSLPEIGDAFAGRDHTTVLHACRQIKLLMETETKLREDWDKLMRKFSE.

The tract at residues 1 to 75 (MESWSRCLER…GIREVVLAIG (75 aa)) is domain I, interacts with DnaA modulators. The domain II stretch occupies residues 75 to 101 (GSRPKTTELTVPVDTTGRLSQTVPFNG). Residues 102–319 (NLDTHYNFDN…GALNTLVARA (218 aa)) form a domain III, AAA+ region region. ATP-binding residues include Gly-147, Gly-149, Lys-150, and Thr-151. Positions 320–439 (NFTGRAVTIE…WDKLMRKFSE (120 aa)) are domain IV, binds dsDNA.

It belongs to the DnaA family. In terms of assembly, oligomerizes as a right-handed, spiral filament on DNA at oriC.

It localises to the cytoplasm. Plays an essential role in the initiation and regulation of chromosomal replication. ATP-DnaA binds to the origin of replication (oriC) to initiate formation of the DNA replication initiation complex once per cell cycle. Binds the DnaA box (a 9 base pair repeat at the origin) and separates the double-stranded (ds)DNA. Forms a right-handed helical filament on oriC DNA; dsDNA binds to the exterior of the filament while single-stranded (ss)DNA is stabiized in the filament's interior. The ATP-DnaA-oriC complex binds and stabilizes one strand of the AT-rich DNA unwinding element (DUE), permitting loading of DNA polymerase. After initiation quickly degrades to an ADP-DnaA complex that is not apt for DNA replication. Binds acidic phospholipids. The polypeptide is Chromosomal replication initiator protein DnaA (Xylella fastidiosa (strain Temecula1 / ATCC 700964)).